The primary structure comprises 502 residues: Glutamate--tRNA ligase (502 aa).

The 'HIGH' region motif lies at 9-19 (PSPTGFPHVGT). A 'KMSKS' region motif is present at residues 250 to 254 (KLSKR). Lys-253 contacts ATP.

Belongs to the class-I aminoacyl-tRNA synthetase family. Glutamate--tRNA ligase type 1 subfamily. In terms of assembly, monomer.

It is found in the cytoplasm. It catalyses the reaction tRNA(Glu) + L-glutamate + ATP = L-glutamyl-tRNA(Glu) + AMP + diphosphate. Its function is as follows. Catalyzes the attachment of glutamate to tRNA(Glu) in a two-step reaction: glutamate is first activated by ATP to form Glu-AMP and then transferred to the acceptor end of tRNA(Glu). The chain is Glutamate--tRNA ligase from Acinetobacter baumannii (strain AYE).